Reading from the N-terminus, the 443-residue chain is Xaa-Pro dipeptidase (443 aa).

5 residues coordinate Mn(2+): Asp246, Asp257, His339, Glu384, and Glu423.

The protein belongs to the peptidase M24B family. Bacterial-type prolidase subfamily. It depends on Mn(2+) as a cofactor.

It catalyses the reaction Xaa-L-Pro dipeptide + H2O = an L-alpha-amino acid + L-proline. Functionally, splits dipeptides with a prolyl residue in the C-terminal position. The sequence is that of Xaa-Pro dipeptidase from Escherichia coli (strain SMS-3-5 / SECEC).